The primary structure comprises 549 residues: Cytoplasmic trehalase (549 aa).

Substrate-binding positions include arginine 168, 175 to 176, asparagine 212, 221 to 223, 292 to 294, and glycine 324; these read WD, RSQ, and RDE. Residues aspartate 326 and glutamate 509 each act as proton donor/acceptor in the active site. Glutamate 525 contributes to the substrate binding site.

Belongs to the glycosyl hydrolase 37 family. Monomer.

The protein localises to the cytoplasm. The catalysed reaction is alpha,alpha-trehalose + H2O = alpha-D-glucose + beta-D-glucose. The protein operates within glycan degradation; trehalose degradation; D-glucose from alpha,alpha-trehalose: step 1/1. Its function is as follows. Hydrolyzes trehalose to glucose. Could be involved, in cells returning to low osmolarity conditions, in the utilization of the accumulated cytoplasmic trehalose, which was synthesized in response to high osmolarity. The protein is Cytoplasmic trehalase of Escherichia coli O157:H7.